Reading from the N-terminus, the 432-residue chain is Cysteine desulfurase, mitosomal (432 aa).

Pyridoxal 5'-phosphate contacts are provided by residues 102-103, Gln-212, and 232-234; these read AT and CAH. At Lys-235 the chain carries N6-(pyridoxal phosphate)lysine. Thr-272 provides a ligand contact to pyridoxal 5'-phosphate. The active-site Cysteine persulfide intermediate is the Cys-357. A [2Fe-2S] cluster-binding site is contributed by Cys-357.

Belongs to the class-V pyridoxal-phosphate-dependent aminotransferase family. NifS/IscS subfamily. Pyridoxal 5'-phosphate is required as a cofactor.

It localises to the mitosome. It catalyses the reaction (sulfur carrier)-H + L-cysteine = (sulfur carrier)-SH + L-alanine. Its function is as follows. Catalyzes the removal of elemental sulfur from cysteine to produce alanine. It supplies the inorganic sulfur for iron-sulfur (Fe-S) clusters in mitosomes. In Encephalitozoon cuniculi (strain GB-M1) (Microsporidian parasite), this protein is Cysteine desulfurase, mitosomal.